Consider the following 168-residue polypeptide: Siroheme decarboxylase NirH subunit (168 aa).

Belongs to the Ahb/Nir family. As to quaternary structure, probably forms a complex composed of NirD, NirL, NirG and NirH. All proteins are required for the total conversion of siroheme to didecarboxysiroheme.

The enzyme catalyses siroheme + 2 H(+) = 12,18-didecarboxysiroheme + 2 CO2. The protein operates within porphyrin-containing compound metabolism. Functionally, involved in heme d1 biosynthesis. Catalyzes the decarboxylation of siroheme into didecarboxysiroheme. The chain is Siroheme decarboxylase NirH subunit from Stutzerimonas stutzeri (Pseudomonas stutzeri).